The chain runs to 313 residues: Cytochrome f (313 aa).

A signal peptide spans M1–A30. Positions 31, 51, 54, and 55 each coordinate heme. The chain crosses the membrane as a helical span at residues V279–L298.

This sequence belongs to the cytochrome f family. In terms of assembly, the 4 large subunits of the cytochrome b6-f complex are cytochrome b6, subunit IV (17 kDa polypeptide, petD), cytochrome f and the Rieske protein, while the 4 small subunits are PetG, PetL, PetM and PetN. The complex functions as a dimer. Heme serves as cofactor.

The protein resides in the plastid. It is found in the chloroplast thylakoid membrane. Functionally, component of the cytochrome b6-f complex, which mediates electron transfer between photosystem II (PSII) and photosystem I (PSI), cyclic electron flow around PSI, and state transitions. In Nephroselmis olivacea (Green alga), this protein is Cytochrome f.